A 137-amino-acid chain; its full sequence is Putative pre-16S rRNA nuclease (137 aa).

This sequence belongs to the YqgF nuclease family.

It localises to the cytoplasm. Functionally, could be a nuclease involved in processing of the 5'-end of pre-16S rRNA. This Bacillus cereus (strain 03BB102) protein is Putative pre-16S rRNA nuclease.